Reading from the N-terminus, the 365-residue chain is DNA replication and repair protein RecF (365 aa).

An ATP-binding site is contributed by 30–37 (GENGQGKT).

It belongs to the RecF family.

It is found in the cytoplasm. Its function is as follows. The RecF protein is involved in DNA metabolism; it is required for DNA replication and normal SOS inducibility. RecF binds preferentially to single-stranded, linear DNA. It also seems to bind ATP. This chain is DNA replication and repair protein RecF, found in Desulfitobacterium hafniense (strain DSM 10664 / DCB-2).